The primary structure comprises 314 residues: tRNA pseudouridine synthase B (314 aa).

The active-site Nucleophile is Asp-47.

Belongs to the pseudouridine synthase TruB family. Type 1 subfamily.

The catalysed reaction is uridine(55) in tRNA = pseudouridine(55) in tRNA. Its function is as follows. Responsible for synthesis of pseudouridine from uracil-55 in the psi GC loop of transfer RNAs. This is tRNA pseudouridine synthase B from Vibrio vulnificus (strain CMCP6).